A 176-amino-acid chain; its full sequence is Large ribosomal subunit protein uL22z (176 aa).

Residues 154–163 (KEEPVKKEPE) show a composition bias toward basic and acidic residues. Positions 154 to 176 (KEEPVKKEPETQLAAKSKKGASS) are disordered.

This sequence belongs to the universal ribosomal protein uL22 family.

In Arabidopsis thaliana (Mouse-ear cress), this protein is Large ribosomal subunit protein uL22z (RPL17A).